The chain runs to 309 residues: THAP domain-containing protein 7 (309 aa).

The THAP-type zinc finger occupies 1 to 93 (MPRHCSAAGC…LKEGAVPTIF (93 aa)). The residue at position 162 (serine 162) is a Phosphoserine. The interval 176–210 (SDLLGPLGAQADEAGCSTQPSPEQHPSPLEPQPAS) is disordered. Pro residues predominate over residues 198-209 (EQHPSPLEPQPA). Serine 210 is subject to Phosphoserine. Residues 229-232 (EHSY) carry the HCFC1-binding motif (HBM) motif.

In terms of assembly, forms homodimers. Interacts with HDAC3 and nuclear hormone receptor corepressors. Interacts via HBM with HCFC1.

It localises to the nucleus. The protein localises to the chromosome. Functionally, chromatin-associated, histone tail-binding protein that represses transcription via recruitment of HDAC3 and nuclear hormone receptor corepressors. This is THAP domain-containing protein 7 (Thap7) from Mus musculus (Mouse).